A 63-amino-acid chain; its full sequence is Sperm protamine P1 (63 aa).

The tract at residues 1–47 (MARCRRHIRSRSRSRNQCQRRRRRSHYNRRRTYRRSRRHSRRRRVRR) is disordered.

Belongs to the protamine P1 family. In terms of tissue distribution, testis.

The protein resides in the nucleus. It localises to the chromosome. Functionally, protamines substitute for histones in the chromatin of sperm during the haploid phase of spermatogenesis. They compact sperm DNA into a highly condensed, stable and inactive complex. The sequence is that of Sperm protamine P1 (PRM1) from Planigale tenuirostris (Narrow-nosed planigale).